The primary structure comprises 472 residues: Transmembrane protein 8B (472 aa).

The segment at Met-1 to Trp-36 is disordered. Residues Met-1–Leu-233 are Extracellular-facing. 2 N-linked (GlcNAc...) asparagine glycosylation sites follow: Asn-92 and Asn-100. The EGF-like domain maps to Phe-182 to Thr-221. 3 disulfide bridges follow: Cys-186–Cys-196, Cys-190–Cys-209, and Cys-211–Cys-220. The helical transmembrane segment at Leu-234–Ile-254 threads the bilayer. The Cytoplasmic portion of the chain corresponds to Arg-255–Arg-257. Residues Tyr-258–Ala-277 traverse the membrane as a helical segment. Topologically, residues Cys-278–Asp-292 are extracellular. A helical transmembrane segment spans residues Val-293 to Met-313. Residues Ala-314 to Arg-315 are Cytoplasmic-facing. Residues Leu-316 to Leu-336 form a helical membrane-spanning segment. Residues Gln-337–Gly-342 are Extracellular-facing. A helical transmembrane segment spans residues Leu-343 to Val-363. Residues Arg-364–Trp-379 are Cytoplasmic-facing. A helical transmembrane segment spans residues Leu-380 to Val-400. Topologically, residues Glu-401 to Asn-405 are extracellular. The chain crosses the membrane as a helical span at residues Tyr-406–Pro-426. Topologically, residues Pro-427–Ser-472 are cytoplasmic.

This sequence belongs to the TMEM8 family. Isoform 2 (via its cytoplasmic part) interacts with EZR. Isoform 2 is N-glycosylated.

It localises to the cell membrane. The protein resides in the cytoplasm. Its subcellular location is the nucleus. The protein localises to the mitochondrion. It is found in the endoplasmic reticulum. In terms of biological role, may function as a regulator of the EGFR pathway. Probable tumor suppressor which may function in cell growth, proliferation and adhesion. This chain is Transmembrane protein 8B (TMEM8B), found in Homo sapiens (Human).